The following is a 176-amino-acid chain: Ribosome maturation factor RimM (176 aa).

The region spanning 93-172 is the PRC barrel domain; sequence KDEFFYFDII…KIQVKNSLDI (80 aa).

Belongs to the RimM family. In terms of assembly, binds ribosomal protein uS19.

It localises to the cytoplasm. An accessory protein needed during the final step in the assembly of 30S ribosomal subunit, possibly for assembly of the head region. Essential for efficient processing of 16S rRNA. May be needed both before and after RbfA during the maturation of 16S rRNA. It has affinity for free ribosomal 30S subunits but not for 70S ribosomes. In Campylobacter fetus subsp. fetus (strain 82-40), this protein is Ribosome maturation factor RimM.